Reading from the N-terminus, the 117-residue chain is Large ribosomal subunit protein bL20 (117 aa).

It belongs to the bacterial ribosomal protein bL20 family.

Its function is as follows. Binds directly to 23S ribosomal RNA and is necessary for the in vitro assembly process of the 50S ribosomal subunit. It is not involved in the protein synthesizing functions of that subunit. In Nitratidesulfovibrio vulgaris (strain DP4) (Desulfovibrio vulgaris), this protein is Large ribosomal subunit protein bL20.